The primary structure comprises 109 residues: U-scoloptoxin(16)-Ssd1a (109 aa).

A signal peptide spans 1–23 (MTTSATVIIMVLCVGSLVIFSEG).

Post-translationally, contains 4 disulfide bonds. As to expression, expressed by the venom gland.

Its subcellular location is the secreted. The polypeptide is U-scoloptoxin(16)-Ssd1a (Scolopendra dehaani (Thai centipede)).